Consider the following 126-residue polypeptide: MAVPNELKYSKEHEWVKVEGNVATIGITEYAQSELGDIVFVELPETDDEINEGDTFGSVESVKTVSELYAPISGKVVEVNEELEDSPEFVNESPYEKAWMVKVEISDESQLEALLTAEKYSEMIGE.

Residues 22–104 enclose the Lipoyl-binding domain; the sequence is VATIGITEYA…YEKAWMVKVE (83 aa). Lys-63 is modified (N6-lipoyllysine).

Belongs to the GcvH family. In terms of assembly, the glycine cleavage system is composed of four proteins: P, T, L and H. Requires (R)-lipoate as cofactor.

The glycine cleavage system catalyzes the degradation of glycine. The H protein shuttles the methylamine group of glycine from the P protein to the T protein. Functionally, is also involved in protein lipoylation via its role as an octanoyl/lipoyl carrier protein intermediate. The sequence is that of Glycine cleavage system H protein from Staphylococcus aureus (strain JH1).